A 253-amino-acid polypeptide reads, in one-letter code: Ubiquinone biosynthesis O-methyltransferase (253 aa).

Residues R47, G78, D99, and M141 each contribute to the S-adenosyl-L-methionine site.

The protein belongs to the methyltransferase superfamily. UbiG/COQ3 family.

The catalysed reaction is a 3-demethylubiquinol + S-adenosyl-L-methionine = a ubiquinol + S-adenosyl-L-homocysteine + H(+). It carries out the reaction a 3-(all-trans-polyprenyl)benzene-1,2-diol + S-adenosyl-L-methionine = a 2-methoxy-6-(all-trans-polyprenyl)phenol + S-adenosyl-L-homocysteine + H(+). The protein operates within cofactor biosynthesis; ubiquinone biosynthesis. Its function is as follows. O-methyltransferase that catalyzes the 2 O-methylation steps in the ubiquinone biosynthetic pathway. This Bradyrhizobium diazoefficiens (strain JCM 10833 / BCRC 13528 / IAM 13628 / NBRC 14792 / USDA 110) protein is Ubiquinone biosynthesis O-methyltransferase.